The following is a 146-amino-acid chain: VQWTAEEKQLITGLWGKVNVADCGAEALARLLIVYPWTQRFFASFGNLSSPTAILGNPMVRAHGKKVLTSFGDAVKNLDNIKNTFAQLSELHCDKLHVDPENFRLLGDILIIVLAAHFAKDFTPECQAAWQKLVRVVAHALARKYH.

In terms of domain architecture, Globin spans 2 to 146 (QWTAEEKQLI…VAHALARKYH (145 aa)). The heme b site is built by H63 and H92.

This sequence belongs to the globin family. As to quaternary structure, heterotetramer of two alpha chains and two beta chains. In terms of tissue distribution, red blood cells.

Functionally, involved in oxygen transport from the lung to the various peripheral tissues. In Rhea americana (Greater rhea), this protein is Hemoglobin subunit beta (HBB).